Reading from the N-terminus, the 246-residue chain is Adenosine 5'-phosphosulfate reductase (246 aa).

Positions 131, 132, 214, and 217 each coordinate [4Fe-4S] cluster. C242 functions as the Nucleophile; cysteine thiosulfonate intermediate in the catalytic mechanism.

The protein belongs to the PAPS reductase family. CysH subfamily. It depends on [4Fe-4S] cluster as a cofactor.

The protein resides in the cytoplasm. The enzyme catalyses [thioredoxin]-disulfide + sulfite + AMP + 2 H(+) = adenosine 5'-phosphosulfate + [thioredoxin]-dithiol. Its pathway is sulfur metabolism; hydrogen sulfide biosynthesis; sulfite from sulfate. In terms of biological role, catalyzes the formation of sulfite from adenosine 5'-phosphosulfate (APS) using thioredoxin as an electron donor. In Neisseria meningitidis serogroup B (strain ATCC BAA-335 / MC58), this protein is Adenosine 5'-phosphosulfate reductase.